The sequence spans 195 residues: Imidazoleglycerol-phosphate dehydratase (195 aa).

Belongs to the imidazoleglycerol-phosphate dehydratase family.

It is found in the cytoplasm. The enzyme catalyses D-erythro-1-(imidazol-4-yl)glycerol 3-phosphate = 3-(imidazol-4-yl)-2-oxopropyl phosphate + H2O. It participates in amino-acid biosynthesis; L-histidine biosynthesis; L-histidine from 5-phospho-alpha-D-ribose 1-diphosphate: step 6/9. This is Imidazoleglycerol-phosphate dehydratase from Burkholderia ambifaria (strain MC40-6).